The following is a 267-amino-acid chain: 2-keto-3-deoxy-L-rhamnonate aldolase (267 aa).

H49 serves as the catalytic Proton acceptor. Substrate is bound at residue Q151. E153 provides a ligand contact to Mg(2+). The substrate site is built by A178 and D179. D179 contacts Mg(2+).

It belongs to the HpcH/HpaI aldolase family. KDR aldolase subfamily. Homohexamer. Requires Mg(2+) as cofactor. Ni(2+) is required as a cofactor.

It carries out the reaction 2-dehydro-3-deoxy-L-rhamnonate = (S)-lactaldehyde + pyruvate. It catalyses the reaction D-glyceraldehyde + 3-hydroxypyruvate = (3R,4S,5R)-3,4,5,6-tetrahydroxy-2-oxohexanoate. The enzyme catalyses D-glyceraldehyde + 3-hydroxypyruvate = 2-dehydro-D-gluconate. The catalysed reaction is D-glyceraldehyde + 3-hydroxypyruvate = 2-dehydro-D-galactonate. It carries out the reaction D-glyceraldehyde + pyruvate = 2-dehydro-3-deoxy-L-galactonate. It catalyses the reaction 2-dehydro-3-deoxy-D-gluconate = D-glyceraldehyde + pyruvate. Catalyzes the reversible retro-aldol cleavage of 2-keto-3-deoxy-L-rhamnonate (KDR) to pyruvate and lactaldehyde. 2-keto-3-deoxy-L-mannonate, 2-keto-3-deoxy-L-lyxonate and 4-hydroxy-2-ketoheptane-1,7-dioate (HKHD) are also reasonably good substrates, although 2-keto-3-deoxy-L-rhamnonate is likely to be the physiological substrate. In vitro, can catalyze the aldolisation reaction between hydroxypyruvate (HPA) or pyruvate (PA) and D-glyceraldehyde (D-GA). The condensation of hydroxypyruvate and D-glyceraldehyde produces (3R,4S,5R)-3,4,5,6-tetrahydroxy-2-oxohexanoate as the major product, 2-dehydro-D-gluconate and 2-dehydro-D-galactonate. The condensation of pyruvate and D-glyceraldehyde produces 2-dehydro-3-deoxy-L-galactonate as the major product and 2-dehydro-3-deoxy-D-gluconate. The polypeptide is 2-keto-3-deoxy-L-rhamnonate aldolase (rhmA) (Escherichia coli (strain K12)).